The chain runs to 707 residues: 65-kDa microtubule-associated protein 3 (707 aa).

5 coiled-coil regions span residues 49–84 (LEVYRRKVDQANRCRAQLRQAIADAEAQLAAICSAM), 157–179 (NLSMRKLEELHCQLQVLQKEKID), 269–289 (QQEYQHITCNIAASEHEITEA), 354–374 (IVDATMVLEHLEQHISKIKEE), and 464–486 (LEEYNILRQEREEEHRRQRDQKK). A disordered region spans residues 495-574 (QEALYGSKPS…PSRKQSMNPS (80 aa)). Over residues 500 to 512 (GSKPSPSKPLGGK) the composition is skewed to low complexity. Phosphoserine occurs at positions 504 and 528.

The protein belongs to the MAP65/ASE1 family. As to quaternary structure, forms a dimer. Binds to microtubules (MT) during cell division. Bundles polymerized MT via the formation of 25-nm crossbridges with centrally located endocytic MT, and midline phragmoplast MT. In terms of tissue distribution, expressed in all tissues enriched in dividing cells, such as the root and shoot apical meristem, foliar primordia, and young leaves, and embryos.

The protein localises to the nucleus. It is found in the cytoplasm. It localises to the cytoskeleton. The protein resides in the phragmoplast. In terms of biological role, microtubule-associated protein that plays a critical role in organizing the mitotic microtubule array during both early and late mitosis in all plant organs. Essential for the cytokinesis, especially in roots, by maintaining the integrity of the overlapped microtubules in the phragmoplast. Required during root morphogenesis. Needed for giant cell development during root knot nematode infection, where cytokinesis is initiated but not completed. This is 65-kDa microtubule-associated protein 3 (MAP65-3) from Arabidopsis thaliana (Mouse-ear cress).